We begin with the raw amino-acid sequence, 141 residues long: Calcium-binding protein SPEC 2D (141 aa).

EF-hand domains lie at 10–42 (DQIK…MKSV), 43–72 (GHVL…AMIL), 73–107 (DKKC…FDRQ), and 108–141 (ITED…MNFC). Residues aspartate 23, asparagine 25, aspartate 27, and asparagine 29 each coordinate Ca(2+). Ca(2+) is bound by residues aspartate 84, aspartate 86, lysine 90, aspartate 95, aspartate 121, aspartate 125, lysine 127, and glutamate 132.

As to expression, found in cell lineages giving rise to the aboral ectoderm, a squamous epithelium covering the surface of the late stage embryo and larva.

Its function is as follows. Calcium-binding protein involved in larval development and metamorphosis. Likely to function as calcium buffers mediating the transport of calcium from the sea water to the blastocoel where calcium is required for skeleton formation. In Strongylocentrotus purpuratus (Purple sea urchin), this protein is Calcium-binding protein SPEC 2D (SPEC2D).